The sequence spans 393 residues: Phosphopentomutase (393 aa).

Asp-13, Asp-286, His-291, Asp-327, His-328, and His-339 together coordinate Mn(2+).

This sequence belongs to the phosphopentomutase family. Mn(2+) serves as cofactor.

The protein localises to the cytoplasm. The enzyme catalyses 2-deoxy-alpha-D-ribose 1-phosphate = 2-deoxy-D-ribose 5-phosphate. It carries out the reaction alpha-D-ribose 1-phosphate = D-ribose 5-phosphate. Its pathway is carbohydrate degradation; 2-deoxy-D-ribose 1-phosphate degradation; D-glyceraldehyde 3-phosphate and acetaldehyde from 2-deoxy-alpha-D-ribose 1-phosphate: step 1/2. Its function is as follows. Isomerase that catalyzes the conversion of deoxy-ribose 1-phosphate (dRib-1-P) and ribose 1-phosphate (Rib-1-P) to deoxy-ribose 5-phosphate (dRib-5-P) and ribose 5-phosphate (Rib-5-P), respectively. This Symbiobacterium thermophilum (strain DSM 24528 / JCM 14929 / IAM 14863 / T) protein is Phosphopentomutase.